Consider the following 132-residue polypeptide: U-scoloptoxin(05)-Er3a (132 aa).

A signal peptide spans methionine 1–serine 19.

It belongs to the scoloptoxin-05 family. Contains 5 disulfide bonds. Expressed by the venom gland.

The protein resides in the secreted. This chain is U-scoloptoxin(05)-Er3a, found in Ethmostigmus rubripes (Giant centipede).